Here is a 291-residue protein sequence, read N- to C-terminus: Ribosomal protein L11 methyltransferase (291 aa).

The S-adenosyl-L-methionine site is built by Thr-136, Gly-159, Asp-181, and Asn-228.

The protein belongs to the methyltransferase superfamily. PrmA family.

Its subcellular location is the cytoplasm. It catalyses the reaction L-lysyl-[protein] + 3 S-adenosyl-L-methionine = N(6),N(6),N(6)-trimethyl-L-lysyl-[protein] + 3 S-adenosyl-L-homocysteine + 3 H(+). Functionally, methylates ribosomal protein L11. In Sinorhizobium fredii (strain NBRC 101917 / NGR234), this protein is Ribosomal protein L11 methyltransferase.